The following is a 131-amino-acid chain: ATP synthase epsilon chain, chloroplastic (131 aa).

This sequence belongs to the ATPase epsilon chain family. In terms of assembly, F-type ATPases have 2 components, CF(1) - the catalytic core - and CF(0) - the membrane proton channel. CF(1) has five subunits: alpha(3), beta(3), gamma(1), delta(1), epsilon(1). CF(0) has three main subunits: a, b and c.

It is found in the plastid. The protein resides in the chloroplast thylakoid membrane. In terms of biological role, produces ATP from ADP in the presence of a proton gradient across the membrane. The protein is ATP synthase epsilon chain, chloroplastic of Guillardia theta (Cryptophyte).